We begin with the raw amino-acid sequence, 530 residues long: AAA-ATPase At3g28510 (530 aa).

Residues 5-25 (GAIWGITGTTVTSFMFFWAIY) form a helical membrane-spanning segment. 250–257 (GPPGTGKS) serves as a coordination point for ATP. Disordered regions lie at residues 312 to 339 (QRKK…KVDD) and 463 to 530 (KARK…KSDS). Basic and acidic residues-rich tracts occupy residues 326 to 339 (EEKK…KVDD) and 463 to 511 (KARK…KEEN). The span at 512-523 (GNVSQQNGNSID) shows a compositional bias: polar residues.

Belongs to the AAA ATPase family. BCS1 subfamily. The cofactor is Mg(2+).

Its subcellular location is the membrane. The enzyme catalyses ATP + H2O = ADP + phosphate + H(+). The chain is AAA-ATPase At3g28510 from Arabidopsis thaliana (Mouse-ear cress).